The following is a 34-amino-acid chain: Sarcoplasmic/endoplasmic reticulum calcium ATPase regulator DWORF (34 aa).

Residues 12-32 form a helical membrane-spanning segment; the sequence is IVPILLLVGWIVGCIIVIYIV.

Homooligomer. Can also form heterooligomers with other sarcoplasmic/endoplasmic reticulum calcium ATPase (SERCA) regulators ARLN, ERLN, PLN and SLN. Monomer. Interacts with ATP2A1/SERCA1; the interaction results in activation of ATP2A1. Interacts as a monomer with ATP2A2/SERCA2; the interaction results in activation of ATP2A2. As to expression, highly expressed in heart (at protein level). Detected in heart and soleus, a postural muscle group of the hindlimb containing the highest enrichment of slow-twitch muscle fibers. Also expressed in diaphragm, which contains some slow-twitch fibers. Not detected in the quadriceps, a fast-twitch muscle group, or in cardiac atrial muscle. Not expressed in the prenatal heart but gradually increases in abundance postnatally.

It localises to the sarcoplasmic reticulum membrane. Its function is as follows. Enhances the activity of ATP2A1/SERCA1 ATPase in sarcoplasmic reticulum by displacing ATP2A1/SERCA1 inhibitors, thereby acting as a key regulator of skeletal muscle activity. Also enhances the activity of the ATP2A2/SERCA2 ATPase. Does not directly stimulate SERCA pump activity. Binds preferentially to the phosphorylated E1 and E2 conformational forms of ATP2A2 which predominate at high Ca(2+) concentrations during the systolic phase of the cardiac cycle. Competes with ATP2A2 inhibitor phospholamban (PLN) for binding to ATP2A2 and displaces PLN. Can activate ATP2A2 directly in the absence of PLN. Also enhances sarcoplasmic reticulum Ca(2+) uptake and myocyte contractility by displacing the SERCA inhibitory peptides sarcolipin (SLN) and myoregulin (MRLN). This is Sarcoplasmic/endoplasmic reticulum calcium ATPase regulator DWORF from Mus musculus (Mouse).